The chain runs to 876 residues: GRB2-associated and regulator of MAPK protein (876 aa).

Residues 12–320 are CABIT; the sequence is KDVKWSPVAM…HQVKGDMWPE (309 aa). Tyr105 carries the phosphotyrosine modification. A disordered region spans residues 427-448; the sequence is GDSGSDYLFPEANEESAGIPGK. The residue at position 453 (Tyr453) is a Phosphotyrosine. Disordered stretches follow at residues 460–501 and 530–572; these read EGKP…ATLG and LNAP…SYYS. Positions 498–550 are necessary for interaction with GRB2; that stretch reads ATLGATIKSSEIALPPPPVPPKSEAVREECRLLNAPPVPPRSAKPLSTSPSIP. Polar residues predominate over residues 560 to 572; that stretch reads QTRSPSPTLSYYS. Phosphoserine occurs at positions 609 and 613. 2 stretches are compositionally biased toward polar residues: residues 630-639 and 647-657; these read SGASENQTRS and RSYSYPRQKTP. 2 disordered regions span residues 630-664 and 722-759; these read SGASENQTRSDFLLDPSRSYSYPRQKTPGTPKRTC and CPALPPRAPKPVEQKATPETSPLPLKIDGAEEDPTAGS. Residues 811–876 enclose the SAM domain; it reads LSIEEVSKSL…QFINGWRPKI (66 aa).

The protein belongs to the GAREM family. As to quaternary structure, interacts with EGFR. Interacts (via proline-rich domain and phosphorylated at Tyr-105 and Tyr-453) with GRB2 (via SH3 domains); the interaction occurs upon EGF stimulation. Interacts (phosphorylated at Tyr-453) with PTPN11; the interaction increases MAPK/ERK activity and does not affect the GRB2/SOS complex formation. Post-translationally, on EGF stimulation, phosphorylated on Tyr-105 and Tyr-453.

Functionally, acts as an adapter protein that plays a role in intracellular signaling cascades triggered either by the cell surface activated epidermal growth factor receptor and/or cytoplasmic protein tyrosine kinases. Promotes activation of the MAPK/ERK signaling pathway. Plays a role in the regulation of cell proliferation. This is GRB2-associated and regulator of MAPK protein (Garem1) from Mus musculus (Mouse).